A 434-amino-acid polypeptide reads, in one-letter code: Ataxin-10 homolog (434 aa).

Belongs to the ataxin-10 family.

It localises to the cytoplasm. The protein resides in the nucleus. May play a role in the regulation of cytokinesis. This chain is Ataxin-10 homolog (mug160), found in Schizosaccharomyces pombe (strain 972 / ATCC 24843) (Fission yeast).